The chain runs to 122 residues: uncharacterized protein (122 aa).

4 consecutive transmembrane segments (helical) span residues 7 to 27 (IVAI…IFCD), 29 to 49 (LVLA…LGWI), 62 to 82 (AITG…SKNP), and 89 to 109 (KEIF…YFGY).

Its subcellular location is the cell membrane. This is an uncharacterized protein from Methanocaldococcus jannaschii (strain ATCC 43067 / DSM 2661 / JAL-1 / JCM 10045 / NBRC 100440) (Methanococcus jannaschii).